The chain runs to 103 residues: Large ribosomal subunit protein eL30 (103 aa).

It belongs to the eukaryotic ribosomal protein eL30 family.

The chain is Large ribosomal subunit protein eL30 from Methanothrix thermoacetophila (strain DSM 6194 / JCM 14653 / NBRC 101360 / PT) (Methanosaeta thermophila).